A 145-amino-acid polypeptide reads, in one-letter code: 3-hydroxyacyl-[acyl-carrier-protein] dehydratase FabZ (145 aa).

Residue H49 is part of the active site.

Belongs to the thioester dehydratase family. FabZ subfamily.

The protein localises to the cytoplasm. The enzyme catalyses a (3R)-hydroxyacyl-[ACP] = a (2E)-enoyl-[ACP] + H2O. Functionally, involved in unsaturated fatty acids biosynthesis. Catalyzes the dehydration of short chain beta-hydroxyacyl-ACPs and long chain saturated and unsaturated beta-hydroxyacyl-ACPs. In Ehrlichia ruminantium (strain Welgevonden), this protein is 3-hydroxyacyl-[acyl-carrier-protein] dehydratase FabZ.